The following is a 547-amino-acid chain: TBCC domain-containing protein 1 (547 aa).

One can recognise a C-CAP/cofactor C-like domain in the interval 304–435 (PHTHRMVVMS…LEDHMAQTGL (132 aa)).

It belongs to the TBCC family.

The protein resides in the cytoplasm. It is found in the cytoskeleton. It localises to the microtubule organizing center. The protein localises to the centrosome. Its subcellular location is the spindle pole. Functionally, may play a role in the regulation of centrosome and Golgi apparatus positioning. The chain is TBCC domain-containing protein 1 (tbccd1) from Xenopus laevis (African clawed frog).